The sequence spans 153 residues: Large ribosomal subunit protein uL15 (153 aa).

The tract at residues 21–40 (RGIGSGKGKTGGRGIKGQKS) is disordered. A compositionally biased stretch (gly residues) spans 23–35 (IGSGKGKTGGRGI).

This sequence belongs to the universal ribosomal protein uL15 family. As to quaternary structure, part of the 50S ribosomal subunit.

Functionally, binds to the 23S rRNA. The sequence is that of Large ribosomal subunit protein uL15 from Rickettsia canadensis (strain McKiel).